We begin with the raw amino-acid sequence, 529 residues long: Peptide chain release factor 3 (529 aa).

In terms of domain architecture, tr-type G spans 10–278 (ARRRTFAIIS…NFVDLAPAPR (269 aa)). GTP contacts are provided by residues 19–26 (SHPDAGKT), 87–91 (DTPGH), and 141–144 (NKLD).

It belongs to the TRAFAC class translation factor GTPase superfamily. Classic translation factor GTPase family. PrfC subfamily.

It localises to the cytoplasm. In terms of biological role, increases the formation of ribosomal termination complexes and stimulates activities of RF-1 and RF-2. It binds guanine nucleotides and has strong preference for UGA stop codons. It may interact directly with the ribosome. The stimulation of RF-1 and RF-2 is significantly reduced by GTP and GDP, but not by GMP. In Nitratidesulfovibrio vulgaris (strain ATCC 29579 / DSM 644 / CCUG 34227 / NCIMB 8303 / VKM B-1760 / Hildenborough) (Desulfovibrio vulgaris), this protein is Peptide chain release factor 3.